The chain runs to 380 residues: Probable inorganic pyrophosphatase (380 aa).

Asp-198, Asp-203, and Asp-235 together coordinate Mg(2+).

This sequence belongs to the PPase family. Mg(2+) serves as cofactor.

The enzyme catalyses diphosphate + H2O = 2 phosphate + H(+). The protein is Probable inorganic pyrophosphatase of Plasmodium falciparum (isolate 3D7).